We begin with the raw amino-acid sequence, 152 residues long: Acidic phospholipase A2 (152 aa).

A signal peptide spans 1–21; it reads MNPAHLLVLSAVCVSLLGASS. A propeptide spanning residues 22-27 is cleaved from the precursor; sequence IPPQPL. 7 cysteine pairs are disulfide-bonded: C38/C104, C54/C151, C56/C72, C71/C132, C78/C125, C88/C118, and C111/C123. Residues Y55, G57, and G59 each contribute to the Ca(2+) site. H75 is an active-site residue. Ca(2+) is bound at residue D76. The active site involves D126.

This sequence belongs to the phospholipase A2 family. Group I subfamily. D49 sub-subfamily. Requires Ca(2+) as cofactor. Expressed by the venom gland.

The protein localises to the secreted. It carries out the reaction a 1,2-diacyl-sn-glycero-3-phosphocholine + H2O = a 1-acyl-sn-glycero-3-phosphocholine + a fatty acid + H(+). In terms of biological role, PLA2 catalyzes the calcium-dependent hydrolysis of the 2-acyl groups in 3-sn-phosphoglycerides. This is Acidic phospholipase A2 from Ophiophagus hannah (King cobra).